The following is a 122-amino-acid chain: Large ribosomal subunit protein uL14 (122 aa).

The protein belongs to the universal ribosomal protein uL14 family. In terms of assembly, part of the 50S ribosomal subunit. Forms a cluster with proteins L3 and L19. In the 70S ribosome, L14 and L19 interact and together make contacts with the 16S rRNA in bridges B5 and B8.

Its function is as follows. Binds to 23S rRNA. Forms part of two intersubunit bridges in the 70S ribosome. The protein is Large ribosomal subunit protein uL14 of Shewanella baltica (strain OS223).